The following is a 582-amino-acid chain: DnaJ protein ERDJ3A (582 aa).

An N-terminal signal peptide occupies residues 1-25 (MGIPVRSLLVASIVLSSIALHVAAA). In terms of domain architecture, J spans 29–93 (DPYKVLGVDK…EKRKNYDLYG (65 aa)). Asn61 carries an N-linked (GlcNAc...) asparagine glycan. The segment at 178-201 (GGSQHTGSAGKARRGTKSSGHDSS) is disordered. Residues 407–437 (VKDLRSGIKELKNLLENFEKKNKKLASNQAK) adopt a coiled-coil conformation.

As to quaternary structure, interacts with BIP5.

The protein localises to the endoplasmic reticulum. The protein resides in the vacuole. Functionally, may play a role in protein folding in the endoplasmic reticulum. This chain is DnaJ protein ERDJ3A, found in Oryza sativa subsp. japonica (Rice).